A 391-amino-acid chain; its full sequence is 3-ketoacyl-CoA thiolase (391 aa).

The active-site Acyl-thioester intermediate is cysteine 95. Residues histidine 347 and cysteine 377 each act as proton acceptor in the active site.

The protein belongs to the thiolase-like superfamily. Thiolase family. In terms of assembly, heterotetramer of two alpha chains (FadB) and two beta chains (FadA).

Its subcellular location is the cytoplasm. It carries out the reaction an acyl-CoA + acetyl-CoA = a 3-oxoacyl-CoA + CoA. It participates in lipid metabolism; fatty acid beta-oxidation. Catalyzes the final step of fatty acid oxidation in which acetyl-CoA is released and the CoA ester of a fatty acid two carbons shorter is formed. The polypeptide is 3-ketoacyl-CoA thiolase (Marinomonas sp. (strain MWYL1)).